Consider the following 122-residue polypeptide: Large ribosomal subunit protein uL14 (122 aa).

It belongs to the universal ribosomal protein uL14 family. In terms of assembly, part of the 50S ribosomal subunit. Forms a cluster with proteins L3 and L19. In the 70S ribosome, L14 and L19 interact and together make contacts with the 16S rRNA in bridges B5 and B8.

In terms of biological role, binds to 23S rRNA. Forms part of two intersubunit bridges in the 70S ribosome. This Baumannia cicadellinicola subsp. Homalodisca coagulata protein is Large ribosomal subunit protein uL14.